The chain runs to 328 residues: tRNA U34 carboxymethyltransferase (328 aa).

Carboxy-S-adenosyl-L-methionine-binding positions include K91, W105, K110, G130, 152–154 (DPS), M196, Y200, and R315.

This sequence belongs to the class I-like SAM-binding methyltransferase superfamily. CmoB family. As to quaternary structure, homotetramer.

It catalyses the reaction carboxy-S-adenosyl-L-methionine + 5-hydroxyuridine(34) in tRNA = 5-carboxymethoxyuridine(34) in tRNA + S-adenosyl-L-homocysteine + H(+). In terms of biological role, catalyzes carboxymethyl transfer from carboxy-S-adenosyl-L-methionine (Cx-SAM) to 5-hydroxyuridine (ho5U) to form 5-carboxymethoxyuridine (cmo5U) at position 34 in tRNAs. In Psychromonas ingrahamii (strain DSM 17664 / CCUG 51855 / 37), this protein is tRNA U34 carboxymethyltransferase.